The chain runs to 125 residues: Prepro-urotensin II-alpha (125 aa).

The first 21 residues, 1-21, serve as a signal peptide directing secretion; that stretch reads MMCNLLLSFSVLLLSCTHLVA. A propeptide spanning residues 109 to 111 is cleaved from the precursor; sequence QFR. A disulfide bridge connects residues Cys119 and Cys124.

This sequence belongs to the urotensin-2 family.

Its subcellular location is the secreted. Functionally, urotensin is found in the teleost caudal neurosecretory system. It has a suggested role in osmoregulation and as a corticotropin-releasing factor. The non-hormonal portion of this precursor may be a urotensin binding protein, urophysin. The chain is Prepro-urotensin II-alpha from Cyprinus carpio (Common carp).